A 521-amino-acid polypeptide reads, in one-letter code: Formate--tetrahydrofolate ligase (521 aa).

The protein belongs to the formate--tetrahydrofolate ligase family.

It carries out the reaction (6S)-5,6,7,8-tetrahydrofolate + formate + ATP = (6R)-10-formyltetrahydrofolate + ADP + phosphate. The protein operates within one-carbon metabolism; tetrahydrofolate interconversion. This Ureaplasma parvum serovar 3 (strain ATCC 700970) protein is Formate--tetrahydrofolate ligase.